A 180-amino-acid polypeptide reads, in one-letter code: Ribosome maturation factor RimM (180 aa).

The PRC barrel domain occupies 97-169 (PGELSWDFFV…IITVDLPEGL (73 aa)).

The protein belongs to the RimM family. Binds ribosomal protein uS19.

It is found in the cytoplasm. Its function is as follows. An accessory protein needed during the final step in the assembly of 30S ribosomal subunit, possibly for assembly of the head region. Essential for efficient processing of 16S rRNA. May be needed both before and after RbfA during the maturation of 16S rRNA. It has affinity for free ribosomal 30S subunits but not for 70S ribosomes. The chain is Ribosome maturation factor RimM from Bacteroides fragilis (strain YCH46).